Consider the following 393-residue polypeptide: Chalcone synthase 2 (393 aa).

Cys-166 is an active-site residue.

Belongs to the thiolase-like superfamily. Chalcone/stilbene synthases family.

The catalysed reaction is (E)-4-coumaroyl-CoA + 3 malonyl-CoA + 3 H(+) = 2',4,4',6'-tetrahydroxychalcone + 3 CO2 + 4 CoA. It participates in secondary metabolite biosynthesis; flavonoid biosynthesis. In terms of biological role, the primary product of this enzyme is 4,2',4',6'-tetrahydroxychalcone (also termed naringenin-chalcone or chalcone) which can under specific conditions spontaneously isomerize into naringenin. This Ruta graveolens (Common rue) protein is Chalcone synthase 2 (CHS2).